Reading from the N-terminus, the 95-residue chain is Protein TusB (95 aa).

It belongs to the DsrH/TusB family. As to quaternary structure, heterohexamer, formed by a dimer of trimers. The hexameric TusBCD complex contains 2 copies each of TusB, TusC and TusD. The TusBCD complex interacts with TusE.

The protein localises to the cytoplasm. Its function is as follows. Part of a sulfur-relay system required for 2-thiolation of 5-methylaminomethyl-2-thiouridine (mnm(5)s(2)U) at tRNA wobble positions. The protein is Protein TusB of Salmonella dublin (strain CT_02021853).